The sequence spans 332 residues: Biotin synthase (332 aa).

In terms of domain architecture, Radical SAM core spans 53–282 (YFGKKVKLNM…TKEIRISGGR (230 aa)). Residues Cys71, Cys75, and Cys78 each contribute to the [4Fe-4S] cluster site. 4 residues coordinate [2Fe-2S] cluster: Cys115, Cys147, Cys207, and Arg277.

It belongs to the radical SAM superfamily. Biotin synthase family. As to quaternary structure, homodimer. [4Fe-4S] cluster is required as a cofactor. [2Fe-2S] cluster serves as cofactor.

It catalyses the reaction (4R,5S)-dethiobiotin + (sulfur carrier)-SH + 2 reduced [2Fe-2S]-[ferredoxin] + 2 S-adenosyl-L-methionine = (sulfur carrier)-H + biotin + 2 5'-deoxyadenosine + 2 L-methionine + 2 oxidized [2Fe-2S]-[ferredoxin]. Its pathway is cofactor biosynthesis; biotin biosynthesis; biotin from 7,8-diaminononanoate: step 2/2. Its function is as follows. Catalyzes the conversion of dethiobiotin (DTB) to biotin by the insertion of a sulfur atom into dethiobiotin via a radical-based mechanism. The chain is Biotin synthase from Bacillus anthracis.